The sequence spans 296 residues: Protease HtpX homolog (296 aa).

Helical transmembrane passes span 14-34 and 38-58; these read VFLLIGFLALVGIVGAAVGYL and SLVTGIIGALLVGVIYAVIMI. Residue His-144 participates in Zn(2+) binding. The active site involves Glu-145. His-148 contributes to the Zn(2+) binding site. The next 2 helical transmembrane spans lie at 159–179 and 198–218; these read IALALTAAISFLINLGSNWWL and LLVFILSLVVMIFAPLVAAVI. Glu-227 contributes to the Zn(2+) binding site.

Belongs to the peptidase M48B family. Zn(2+) serves as cofactor.

It localises to the cell membrane. The protein is Protease HtpX homolog of Leuconostoc citreum (strain KM20).